The following is a 215-amino-acid chain: Oligoribonuclease (215 aa).

The 166-residue stretch at Leu5–Leu170 folds into the Exonuclease domain. Tyr127 is an active-site residue. Positions Leu196–Gly215 are disordered.

This sequence belongs to the oligoribonuclease family.

The protein localises to the cytoplasm. Its function is as follows. 3'-to-5' exoribonuclease specific for small oligoribonucleotides. The chain is Oligoribonuclease from Mycobacterium bovis (strain BCG / Pasteur 1173P2).